A 368-amino-acid chain; its full sequence is DNA-directed RNA polymerase subunit alpha (368 aa).

An alpha N-terminal domain (alpha-NTD) region spans residues 1–231; that stretch reads MLWKGFQKPK…DHMNIFINFE (231 aa). The alpha C-terminal domain (alpha-CTD) stretch occupies residues 243 to 368; sequence KPEIRNENLN…GFGGDNNPGF (126 aa).

The protein belongs to the RNA polymerase alpha chain family. Homodimer. The RNAP catalytic core consists of 2 alpha, 1 beta, 1 beta' and 1 omega subunit. When a sigma factor is associated with the core the holoenzyme is formed, which can initiate transcription.

It catalyses the reaction RNA(n) + a ribonucleoside 5'-triphosphate = RNA(n+1) + diphosphate. Functionally, DNA-dependent RNA polymerase catalyzes the transcription of DNA into RNA using the four ribonucleoside triphosphates as substrates. This is DNA-directed RNA polymerase subunit alpha from Koribacter versatilis (strain Ellin345).